The chain runs to 455 residues: MIIDLFQSKKLIISIIILILRISLFSCAEHLFFNNNFNFFNFSENNHAKVNELNIDTKYLYQGLRNINIYLALSALNGITKEKINDISQWNGYKTRNNDETNISNVVVTEWKQLNKKSFFLKNNNISNNDNLIKGMPNPYFINSLTEDINNINLYFNIRNDIKYGEIIYKGTYIPHIYNNIFLIFLISYMYWFCIKILFNGYIKGKYVAKEYILKISTLFIFFVILKISLIFLPAILSCIVCLILTFYFYSISMSPCKDIFYLFESTRIKKEPIGWIIIVYAESILIGNVIYNFLCPPKIIIIFIRYIQNDFLVKIICLTIILFISFLIFFLMISNIFPAKKAQNFVFSFTSSYLIVSCFAYFWNIFLLRFLNNTNIFQIEPIMFFSYTPKFVFNRQNMFALFMIFAMSILSIIFPRIKKLKQNIFDMKENIYDSDIDIGKASKNRYNIILNYFT.

Residues 12 to 32 (IISIIILILRISLFSCAEHLF) traverse the membrane as a helical segment. 3 N-linked (GlcNAc...) asparagine glycosylation sites follow: Asn-41, Asn-102, and Asn-125. Helical transmembrane passes span 181-201 (IFLIFLISYMYWFCIKILFNG), 220-240 (FIFFVILKISLIFLPAILSCI), 244-264 (ILTFYFYSISMSPCKDIFYLF), 285-305 (ILIGNVIYNFLCPPKIIIIFI), 312-332 (FLVKIICLTIILFISFLIFFL), and 346-366 (FVFSFTSSYLIVSCFAYFWNI). N-linked (GlcNAc...) asparagine glycosylation is present at Asn-373. A helical membrane pass occupies residues 398–418 (NMFALFMIFAMSILSIIFPRI).

It is found in the cell projection. Its subcellular location is the cilium. The protein resides in the flagellum. The protein localises to the cell membrane. Plays a role in gamete fertilization. Required for the successful transmission of parasites to mosquito. In Plasmodium berghei (strain Anka), this protein is Membrane protein Pbs54.